Consider the following 773-residue polypeptide: 3-isopropylmalate dehydratase (773 aa).

[4Fe-4S] cluster is bound by residues Cys355, Cys415, and Cys418.

It belongs to the aconitase/IPM isomerase family. Monomer. Requires [4Fe-4S] cluster as cofactor.

It catalyses the reaction (2R,3S)-3-isopropylmalate = (2S)-2-isopropylmalate. It functions in the pathway amino-acid biosynthesis; L-leucine biosynthesis; L-leucine from 3-methyl-2-oxobutanoate: step 2/4. In terms of biological role, catalyzes the isomerization between 2-isopropylmalate and 3-isopropylmalate, via the formation of 2-isopropylmaleate. The chain is 3-isopropylmalate dehydratase (LEU1) from Mycosarcoma maydis (Corn smut fungus).